The primary structure comprises 813 residues: Origin of replication complex subunit 1B (813 aa).

The interval 1 to 109 (MASTPRAKTF…TPKKKKKIDS (109 aa)) is disordered. Residues 11–21 (KSPTKTPSNIY) show a composition bias toward polar residues. The span at 27 to 41 (SPSSTSHTPQTPETH) shows a compositional bias: low complexity. Residues 43–52 (PLRRSARHVS) show a composition bias toward basic residues. Residues 83–90 (PRKPTTDV) carry the Nuclear localization signal motif. A histone H3 binding region spans residues 163–187 (DPEIEDCQICFKSDTNIMIECDDCL). A PHD-type zinc finger spans residues 166–215 (IEDCQICFKSDTNIMIECDDCLGGFHLKCLKPPLKEVPEGDWICQFCEVK). Residues Cys-169, Cys-172, Cys-183, Cys-186, His-191, and Cys-194 each coordinate Zn(2+). Residues 203–207 (PEGDW) form a histone H3 binding region. Zn(2+) is bound by residues Cys-209 and Cys-212. Residues 226–344 (PKPPEGKKLA…VHWRSFKRLA (119 aa)) form the BAH domain. Residues 319 to 324 (ASNDGD) form a histone H3 binding region. A disordered region spans residues 349-372 (GDSDSDQEWNGRKEEEVDDSDEEM). The interval 436–803 (PKSLPCRSKE…DDVAFALKDN (368 aa)) is necessary and sufficient for ORC complex assembly. Residue 471–479 (GVPGTGKTI) coordinates ATP. Positions 561 and 562 each coordinate Mg(2+). Residues Glu-562, Asn-595, and Arg-660 each coordinate ATP.

The protein belongs to the ORC1 family. As to quaternary structure, component of the origin recognition complex (ORC) composed of at least ORC1 (ORC1A or ORC1B), ORC2, ORC3, ORC4, ORC5 and ORC6. ORC is regulated in a cell-cycle and development dependent manner. It is sequentially assembled at the exit from anaphase of mitosis and disassembled as cells enter S phase. Interacts directly with ORC2 and ORC5. Binds mostly unmodified histone H3, and, with lower efficiency, H3K4me1 H3K4me2 and H3K4me3. In terms of tissue distribution, follow a cell-cycle regulation with a peak at the G1/S-phase. Mostly expressed in flower buds, and, to a lower exent, in roots, leaves and stems.

It is found in the nucleus. Functionally, essential protein required for ovules fertilization. Component of the origin recognition complex (ORC) that binds origins of replication. It has a role in both chromosomal replication and mating type transcriptional silencing. Binds to the ARS consensus sequence (ACS) of origins of replication. H3K4me3 effector that positively regulates the transcription of a subset of genes. The protein is Origin of replication complex subunit 1B of Arabidopsis thaliana (Mouse-ear cress).